A 192-amino-acid chain; its full sequence is Signal peptidase complex catalytic subunit SEC11C (192 aa).

Residues 1-28 (MVRAGAVGTHLPTSSLDIFGDLRKMNKR) are Cytoplasmic-facing. A helical; Signal-anchor for type II membrane protein membrane pass occupies residues 29–48 (QLYYQVLNFAMIVSSALMIW). The Lumenal portion of the chain corresponds to 49–192 (KGLIVLTGSE…GAYVLLKRES (144 aa)). Catalysis depends on charge relay system residues Ser-68, His-108, and Asp-134. A C-terminal short (CTS) helix region spans residues 177–188 (ALLAVMGAYVLL).

This sequence belongs to the peptidase S26B family. In terms of assembly, component of the signal peptidase complex paralog C (SPC-C) composed of a catalytic subunit SEC11C and three accessory subunits SPCS1, SPCS2 and SPCS3. Within the complex, interacts with SPCS2 and SPCS3. The complex induces a local thinning of the ER membrane which is used to measure the length of the signal peptide (SP) h-region of protein substrates. This ensures the selectivity of the complex towards h-regions shorter than 18-20 amino acids. Post-translationally, may undergo processing at the N-terminus.

The protein resides in the endoplasmic reticulum membrane. It carries out the reaction Cleavage of hydrophobic, N-terminal signal or leader sequences from secreted and periplasmic proteins.. Catalytic component of the signal peptidase complex (SPC) which catalyzes the cleavage of N-terminal signal sequences from nascent proteins as they are translocated into the lumen of the endoplasmic reticulum. Specifically cleaves N-terminal signal peptides that contain a hydrophobic alpha-helix (h-region) shorter than 18-20 amino acids. The sequence is that of Signal peptidase complex catalytic subunit SEC11C (Sec11c) from Mus musculus (Mouse).